Consider the following 448-residue polypeptide: ATP-dependent protease ATPase subunit HslU (448 aa).

ATP contacts are provided by residues V21, 63–68 (GVGKTE), D260, E326, and R398.

The protein belongs to the ClpX chaperone family. HslU subfamily. A double ring-shaped homohexamer of HslV is capped on each side by a ring-shaped HslU homohexamer. The assembly of the HslU/HslV complex is dependent on binding of ATP.

Its subcellular location is the cytoplasm. ATPase subunit of a proteasome-like degradation complex; this subunit has chaperone activity. The binding of ATP and its subsequent hydrolysis by HslU are essential for unfolding of protein substrates subsequently hydrolyzed by HslV. HslU recognizes the N-terminal part of its protein substrates and unfolds these before they are guided to HslV for hydrolysis. The protein is ATP-dependent protease ATPase subunit HslU of Sulfurihydrogenibium sp. (strain YO3AOP1).